Consider the following 110-residue polypeptide: Insulin-2 (110 aa).

The N-terminal stretch at 1-24 (MALWIRFLPLLALLILWEPRPAQA) is a signal peptide. Disulfide bonds link cysteine 31–cysteine 96, cysteine 43–cysteine 109, and cysteine 95–cysteine 100. The propeptide at 57 to 87 (EVEDPQVAQLELGGGPGAGDLQTLALEVARQ) is c peptide.

The protein belongs to the insulin family. In terms of assembly, heterodimer of a B chain and an A chain linked by two disulfide bonds.

It localises to the secreted. Functionally, insulin decreases blood glucose concentration. It increases cell permeability to monosaccharides, amino acids and fatty acids. It accelerates glycolysis, the pentose phosphate cycle, and glycogen synthesis in liver. This is Insulin-2 (Ins2) from Rattus norvegicus (Rat).